A 216-amino-acid chain; its full sequence is Oligoribonuclease (216 aa).

One can recognise an Exonuclease domain in the interval Val-6 to Leu-171. Tyr-128 is a catalytic residue.

The protein belongs to the oligoribonuclease family.

It is found in the cytoplasm. Its function is as follows. 3'-to-5' exoribonuclease specific for small oligoribonucleotides. The protein is Oligoribonuclease of Nocardia farcinica (strain IFM 10152).